A 232-amino-acid polypeptide reads, in one-letter code: Thrombin-like enzyme bothrombin (232 aa).

Residues 1-223 (VIGGDECDIN…YLPWIQSIIA (223 aa)) enclose the Peptidase S1 domain. 6 disulfide bridges follow: Cys-7/Cys-139, Cys-26/Cys-42, Cys-74/Cys-230, Cys-118/Cys-184, Cys-150/Cys-163, and Cys-174/Cys-199. Catalysis depends on charge relay system residues His-41 and Asp-86. Residues Asn-98 and Asn-146 are each glycosylated (N-linked (GlcNAc...) asparagine). The Charge relay system role is filled by Ser-178. N-linked (GlcNAc...) asparagine glycosylation occurs at Asn-225.

Belongs to the peptidase S1 family. Snake venom subfamily. As to quaternary structure, monomer. In terms of tissue distribution, expressed by the venom gland.

It is found in the secreted. It catalyses the reaction Selective cleavage of Arg-|-Xaa bond in fibrinogen, to form fibrin, and release fibrinopeptide A. The specificity of further degradation of fibrinogen varies with species origin of the enzyme.. Inhibited by diisopropylfluorophosphate (DFP), but not by hirudin. In terms of biological role, thrombin-like snake venom serine protease that clots fibrinogen by releasing fibrinopeptide A from the alpha chain of fibrinogen (FGA), induces platelet aggregation through its interaction with GPIb (GP1BA/GP1BB), and activates factor VIII (F8). This chain is Thrombin-like enzyme bothrombin, found in Bothrops jararaca (Jararaca).